The primary structure comprises 133 residues: Profilin-1 (133 aa).

Belongs to the profilin family. In terms of assembly, occurs in many kinds of cells as a complex with monomeric actin in a 1:1 ratio. As to expression, ubiquitous.

Its subcellular location is the cytoplasm. The protein resides in the cytoskeleton. Binds to actin and affects the structure of the cytoskeleton. At high concentrations, profilin prevents the polymerization of actin, whereas it enhances it at low concentrations. By binding to PIP2, it inhibits the formation of IP3 and DG. This is Profilin-1 (PRO1) from Solanum lycopersicum (Tomato).